Consider the following 431-residue polypeptide: Enolase (431 aa).

Glutamine 167 serves as a coordination point for (2R)-2-phosphoglycerate. Catalysis depends on glutamate 209, which acts as the Proton donor. Mg(2+) is bound by residues aspartate 246, glutamate 289, and aspartate 316. Residues lysine 341, arginine 370, serine 371, and lysine 392 each coordinate (2R)-2-phosphoglycerate. The Proton acceptor role is filled by lysine 341.

Belongs to the enolase family. Component of the RNA degradosome, a multiprotein complex involved in RNA processing and mRNA degradation. It depends on Mg(2+) as a cofactor.

Its subcellular location is the cytoplasm. The protein resides in the secreted. It localises to the cell surface. It catalyses the reaction (2R)-2-phosphoglycerate = phosphoenolpyruvate + H2O. It functions in the pathway carbohydrate degradation; glycolysis; pyruvate from D-glyceraldehyde 3-phosphate: step 4/5. Functionally, catalyzes the reversible conversion of 2-phosphoglycerate (2-PG) into phosphoenolpyruvate (PEP). It is essential for the degradation of carbohydrates via glycolysis. The sequence is that of Enolase from Marinobacter nauticus (strain ATCC 700491 / DSM 11845 / VT8) (Marinobacter aquaeolei).